Consider the following 180-residue polypeptide: MAKNIKDIANQYAKAIFELAGEQDNVDEVLTDLRTIKTVLDENQNFITIASSADVAIASRDDLLKTLTGNSTDSVKNLVKLLQVNNRLNILSIVVDEFVSQYNEVNGIVDVQATTAVALDDGRLDKLASVFASKTGAQQVNIENVVDESILGGVILQSQSTLIDGSLQTKIAKMKAQLLG.

Belongs to the ATPase delta chain family. In terms of assembly, F-type ATPases have 2 components, F(1) - the catalytic core - and F(0) - the membrane proton channel. F(1) has five subunits: alpha(3), beta(3), gamma(1), delta(1), epsilon(1). F(0) has three main subunits: a(1), b(2) and c(10-14). The alpha and beta chains form an alternating ring which encloses part of the gamma chain. F(1) is attached to F(0) by a central stalk formed by the gamma and epsilon chains, while a peripheral stalk is formed by the delta and b chains.

It localises to the cell membrane. Functionally, f(1)F(0) ATP synthase produces ATP from ADP in the presence of a proton or sodium gradient. F-type ATPases consist of two structural domains, F(1) containing the extramembraneous catalytic core and F(0) containing the membrane proton channel, linked together by a central stalk and a peripheral stalk. During catalysis, ATP synthesis in the catalytic domain of F(1) is coupled via a rotary mechanism of the central stalk subunits to proton translocation. Its function is as follows. This protein is part of the stalk that links CF(0) to CF(1). It either transmits conformational changes from CF(0) to CF(1) or is implicated in proton conduction. This chain is ATP synthase subunit delta, found in Leuconostoc mesenteroides subsp. mesenteroides (strain ATCC 8293 / DSM 20343 / BCRC 11652 / CCM 1803 / JCM 6124 / NCDO 523 / NBRC 100496 / NCIMB 8023 / NCTC 12954 / NRRL B-1118 / 37Y).